A 348-amino-acid chain; its full sequence is Dihydroorotase (348 aa).

Zn(2+) contacts are provided by His17 and His19. Residues 19–21 and Asn45 each bind substrate; that span reads HLR. Residues Lys103, His140, and His178 each contribute to the Zn(2+) site. Lys103 bears the N6-carboxylysine mark. His140 provides a ligand contact to substrate. Leu223 is a binding site for substrate. Residue Asp251 coordinates Zn(2+). Residue Asp251 is part of the active site. Residues His255 and Ala267 each coordinate substrate.

This sequence belongs to the metallo-dependent hydrolases superfamily. DHOase family. Class II DHOase subfamily. In terms of assembly, homodimer. The cofactor is Zn(2+).

The catalysed reaction is (S)-dihydroorotate + H2O = N-carbamoyl-L-aspartate + H(+). The protein operates within pyrimidine metabolism; UMP biosynthesis via de novo pathway; (S)-dihydroorotate from bicarbonate: step 3/3. Its function is as follows. Catalyzes the reversible cyclization of carbamoyl aspartate to dihydroorotate. The chain is Dihydroorotase from Escherichia coli (strain UTI89 / UPEC).